Here is a 58-residue protein sequence, read N- to C-terminus: Metallothionein (58 aa).

The segment at 1 to 29 (PDPCCAEGTCECEEGKCKAGCKCTSCRCS) is beta. Residues Cys4, Cys5, Cys10, Cys12, Cys17, Cys21, Cys23, Cys26, Cys28, Cys31, Cys34, Cys38, Cys40, Cys46, Cys50, Cys54, Cys56, and Cys57 each contribute to the a divalent metal cation site. Residues 30-58 (PCEKCTSECECKSKEECAKNCTKPCSCCP) are alpha.

Functionally, metallothioneins have a high content of cysteine residues that bind various heavy metals. Class I MTS in crustacea are involved in the sequestration of elevated levels of heavy-metal ions. The protein is Metallothionein of Potamon potamios.